The chain runs to 462 residues: tRNA-2-methylthio-N(6)-dimethylallyladenosine synthase (462 aa).

Residues 18–138 (RKVFVKTYGC…LPNALARVRS (121 aa)) enclose the MTTase N-terminal domain. The [4Fe-4S] cluster site is built by cysteine 27, cysteine 63, cysteine 101, cysteine 179, cysteine 183, and cysteine 186. Positions 165-397 (RKRGVSAFLT…QALLSEQQYA (233 aa)) constitute a Radical SAM core domain. Positions 400 to 462 (DSMIGREMDV…TNSLIAQKLA (63 aa)) constitute a TRAM domain.

The protein belongs to the methylthiotransferase family. MiaB subfamily. Monomer. It depends on [4Fe-4S] cluster as a cofactor.

The protein localises to the cytoplasm. It catalyses the reaction N(6)-dimethylallyladenosine(37) in tRNA + (sulfur carrier)-SH + AH2 + 2 S-adenosyl-L-methionine = 2-methylsulfanyl-N(6)-dimethylallyladenosine(37) in tRNA + (sulfur carrier)-H + 5'-deoxyadenosine + L-methionine + A + S-adenosyl-L-homocysteine + 2 H(+). In terms of biological role, catalyzes the methylthiolation of N6-(dimethylallyl)adenosine (i(6)A), leading to the formation of 2-methylthio-N6-(dimethylallyl)adenosine (ms(2)i(6)A) at position 37 in tRNAs that read codons beginning with uridine. The protein is tRNA-2-methylthio-N(6)-dimethylallyladenosine synthase of Brucella anthropi (strain ATCC 49188 / DSM 6882 / CCUG 24695 / JCM 21032 / LMG 3331 / NBRC 15819 / NCTC 12168 / Alc 37) (Ochrobactrum anthropi).